A 142-amino-acid chain; its full sequence is Myosin-2 essential light chain (142 aa).

EF-hand domains are found at residues 2–37 and 75–110; these read DDLA…LGQN and HTVE…LGER.

In terms of assembly, myosin is a hexamer of 2 heavy chains and 4 light chains (two regulatory light chains and two essential light chains).

The protein localises to the cytoplasm. It localises to the cytoskeleton. Required for cytokinesis and embryo elongation. May regulate myosin II complex formation and/or the association of myosin with actin. May be involved in the organization of mlc-4 and nmy-2 into bundles. This is Myosin-2 essential light chain from Caenorhabditis elegans.